Here is a 190-residue protein sequence, read N- to C-terminus: Imidazoleglycerol-phosphate dehydratase (190 aa).

It belongs to the imidazoleglycerol-phosphate dehydratase family.

It is found in the cytoplasm. The catalysed reaction is D-erythro-1-(imidazol-4-yl)glycerol 3-phosphate = 3-(imidazol-4-yl)-2-oxopropyl phosphate + H2O. Its pathway is amino-acid biosynthesis; L-histidine biosynthesis; L-histidine from 5-phospho-alpha-D-ribose 1-diphosphate: step 6/9. The sequence is that of Imidazoleglycerol-phosphate dehydratase from Wolinella succinogenes (strain ATCC 29543 / DSM 1740 / CCUG 13145 / JCM 31913 / LMG 7466 / NCTC 11488 / FDC 602W) (Vibrio succinogenes).